The chain runs to 202 residues: FMN-dependent NADH:quinone oxidoreductase (202 aa).

Residues S9, 15–17, 95–98, and 139–142 each bind FMN; these read SAS, MYNF, and TSGG.

The protein belongs to the azoreductase type 1 family. Homodimer. FMN serves as cofactor.

The catalysed reaction is 2 a quinone + NADH + H(+) = 2 a 1,4-benzosemiquinone + NAD(+). It catalyses the reaction N,N-dimethyl-1,4-phenylenediamine + anthranilate + 2 NAD(+) = 2-(4-dimethylaminophenyl)diazenylbenzoate + 2 NADH + 2 H(+). Functionally, quinone reductase that provides resistance to thiol-specific stress caused by electrophilic quinones. In terms of biological role, also exhibits azoreductase activity. Catalyzes the reductive cleavage of the azo bond in aromatic azo compounds to the corresponding amines. The sequence is that of FMN-dependent NADH:quinone oxidoreductase from Pseudomonas savastanoi pv. phaseolicola (strain 1448A / Race 6) (Pseudomonas syringae pv. phaseolicola (strain 1448A / Race 6)).